Here is a 310-residue protein sequence, read N- to C-terminus: Methionyl-tRNA formyltransferase (310 aa).

111 to 114 (SLLP) provides a ligand contact to (6S)-5,6,7,8-tetrahydrofolate.

The protein belongs to the Fmt family.

It carries out the reaction L-methionyl-tRNA(fMet) + (6R)-10-formyltetrahydrofolate = N-formyl-L-methionyl-tRNA(fMet) + (6S)-5,6,7,8-tetrahydrofolate + H(+). Attaches a formyl group to the free amino group of methionyl-tRNA(fMet). The formyl group appears to play a dual role in the initiator identity of N-formylmethionyl-tRNA by promoting its recognition by IF2 and preventing the misappropriation of this tRNA by the elongation apparatus. This is Methionyl-tRNA formyltransferase from Rhodopseudomonas palustris (strain BisB5).